Reading from the N-terminus, the 180-residue chain is Large ribosomal subunit protein uL5 (180 aa).

The protein belongs to the universal ribosomal protein uL5 family. As to quaternary structure, part of the 50S ribosomal subunit; part of the 5S rRNA/L5/L18/L25 subcomplex. Contacts the 5S rRNA and the P site tRNA. Forms a bridge to the 30S subunit in the 70S ribosome.

Its function is as follows. This is one of the proteins that bind and probably mediate the attachment of the 5S RNA into the large ribosomal subunit, where it forms part of the central protuberance. In the 70S ribosome it contacts protein S13 of the 30S subunit (bridge B1b), connecting the 2 subunits; this bridge is implicated in subunit movement. Contacts the P site tRNA; the 5S rRNA and some of its associated proteins might help stabilize positioning of ribosome-bound tRNAs. The sequence is that of Large ribosomal subunit protein uL5 from Lactobacillus helveticus (strain DPC 4571).